A 115-amino-acid polypeptide reads, in one-letter code: Disintegrin EC6 subunit alpha (115 aa).

The first 20 residues, 1-20, serve as a signal peptide directing secretion; sequence MIQVLLVIICLAVFPYQGSS. Residues 21 to 47 constitute a propeptide that is removed on maturation; that stretch reads IILESGNINDYEIVYPKKVAVLPTGAM. The region spanning 48-112 is the Disintegrin domain; sequence NSVHPCCDPV…DCPRNRYKGK (65 aa). Disulfide bonds link Cys-53-Cys-76, Cys-67-Cys-73, Cys-72-Cys-97, and Cys-85-Cys-104. A Cell attachment site; atypical (MLD) motif is present at residues 89–91; the sequence is MLD.

It belongs to the disintegrin family. Dimeric disintegrin subfamily. As to quaternary structure, heterodimer with subunit beta; disulfide-linked. As to expression, expressed by the venom gland.

The protein localises to the secreted. Potently inhibits adhesion of alpha-4/beta-1 (ITGA4/ITGB1) and alpha-9/beta-1 (ITGA9/ITGB1) integrins to VCAM1, and adhesion of alpha-5/beta-1 (ITGA5/ITGB1) integrin to fibronectin. Has a much less effect on alpha-IIb/beta-3 (ITGA2B/ITGB3) integrin. Also potently inhibits neutrophil migration across TNF-alpha-activated human umbilical endothelial cells. The sequence is that of Disintegrin EC6 subunit alpha from Echis carinatus sochureki (Saw-scaled viper).